Consider the following 1400-residue polypeptide: DNA-directed RNA polymerase subunit beta' (1400 aa).

Zn(2+)-binding residues include cysteine 71, cysteine 73, cysteine 86, and cysteine 89. Mg(2+) contacts are provided by aspartate 462, aspartate 464, and aspartate 466. The Zn(2+) site is built by cysteine 810, cysteine 884, cysteine 891, and cysteine 894. Residues 1378 to 1400 (EKQATIVPPAAPEAEPLALPPAE) form a disordered region.

The protein belongs to the RNA polymerase beta' chain family. In terms of assembly, the RNAP catalytic core consists of 2 alpha, 1 beta, 1 beta' and 1 omega subunit. When a sigma factor is associated with the core the holoenzyme is formed, which can initiate transcription. Mg(2+) is required as a cofactor. It depends on Zn(2+) as a cofactor.

The enzyme catalyses RNA(n) + a ribonucleoside 5'-triphosphate = RNA(n+1) + diphosphate. In terms of biological role, DNA-dependent RNA polymerase catalyzes the transcription of DNA into RNA using the four ribonucleoside triphosphates as substrates. The chain is DNA-directed RNA polymerase subunit beta' from Rhodopseudomonas palustris (strain BisB5).